The primary structure comprises 488 residues: Inosine-5'-monophosphate dehydrogenase (488 aa).

CBS domains lie at 95-153 (VISN…SIKI) and 157-216 (MTKE…AKDE). Residues Asp250 and 300–302 (GIG) contribute to the NAD(+) site. Residues Gly302 and Gly304 each contribute to the K(+) site. Ser305 contacts IMP. Residue Cys307 participates in K(+) binding. Cys307 serves as the catalytic Thioimidate intermediate. IMP is bound by residues 340 to 342 (DGG), 363 to 364 (GS), and 387 to 391 (YRGMG). Arg403 (proton acceptor) is an active-site residue. Glu417 contacts IMP. The interval 467–488 (AGLAESHPHDVQITKESPNYSF) is disordered. K(+) is bound by residues Glu471, Ser472, and His473.

It belongs to the IMPDH/GMPR family. As to quaternary structure, homotetramer. It depends on K(+) as a cofactor.

It carries out the reaction IMP + NAD(+) + H2O = XMP + NADH + H(+). It participates in purine metabolism; XMP biosynthesis via de novo pathway; XMP from IMP: step 1/1. Mycophenolic acid (MPA) is a non-competitive inhibitor that prevents formation of the closed enzyme conformation by binding to the same site as the amobile flap. In contrast, mizoribine monophosphate (MZP) is a competitive inhibitor that induces the closed conformation. MPA is a potent inhibitor of mammalian IMPDHs but a poor inhibitor of the bacterial enzymes. MZP is a more potent inhibitor of bacterial IMPDH. Catalyzes the conversion of inosine 5'-phosphate (IMP) to xanthosine 5'-phosphate (XMP), the first committed and rate-limiting step in the de novo synthesis of guanine nucleotides, and therefore plays an important role in the regulation of cell growth. The polypeptide is Inosine-5'-monophosphate dehydrogenase (Staphylococcus saprophyticus subsp. saprophyticus (strain ATCC 15305 / DSM 20229 / NCIMB 8711 / NCTC 7292 / S-41)).